The following is a 527-amino-acid chain: Putative ABC transporter peptide-binding protein BOV_A0352 (527 aa).

The signal sequence occupies residues 1–23 (MRLRNFYSALALSAAVFAGPLYA).

The protein belongs to the bacterial solute-binding protein 5 family. In terms of assembly, the complex is composed of two ATP-binding proteins (BOV_A0347 and BOV_A0348), two transmembrane proteins (BOV_A0350 and BOV_A0351) and a solute-binding protein (BOV_A0352).

The protein localises to the periplasm. Functionally, probably part of an ABC transporter complex that could be involved in peptide import. This chain is Putative ABC transporter peptide-binding protein BOV_A0352, found in Brucella ovis (strain ATCC 25840 / 63/290 / NCTC 10512).